A 550-amino-acid chain; its full sequence is 65-kDa microtubule-associated protein 5 (550 aa).

Coiled coils occupy residues 46–174 (NKKV…QKVN) and 288–310 (IREA…KELV). A disordered region spans residues 471-531 (QFREQKRLQG…PGRSVTSGGK (61 aa)). The segment covering 502-511 (QSLNTDNVTK) has biased composition (polar residues).

This sequence belongs to the MAP65/ASE1 family. Forms a dimer. Binds to MT, mostly with coaligned MT, both between parallel or antiparallel, forming thick bundles. Bundles polymerized MT via the formation of 25-nm crossbridges with cortical MT.

Its subcellular location is the nucleus. It is found in the cytoplasm. The protein resides in the cytoskeleton. It localises to the spindle. The protein localises to the phragmoplast. Its subcellular location is the cell cortex. It is found in the cell junction. The protein resides in the plasmodesma. Its function is as follows. Microtubule-associated protein that bundle and stabilize adjacent microtubules (MT) of the cell cortex. Confers MT resistance to the drug oryzalin. Promotes the formation of a planar network of antiparallel microtubules. The sequence is that of 65-kDa microtubule-associated protein 5 (MAP65-5) from Arabidopsis thaliana (Mouse-ear cress).